Here is a 348-residue protein sequence, read N- to C-terminus: Protein RecA (348 aa).

Residue 64–71 (GPESSGKT) coordinates ATP.

Belongs to the RecA family.

It localises to the cytoplasm. In terms of biological role, can catalyze the hydrolysis of ATP in the presence of single-stranded DNA, the ATP-dependent uptake of single-stranded DNA by duplex DNA, and the ATP-dependent hybridization of homologous single-stranded DNAs. It interacts with LexA causing its activation and leading to its autocatalytic cleavage. The polypeptide is Protein RecA (Blastochloris viridis (Rhodopseudomonas viridis)).